A 745-amino-acid polypeptide reads, in one-letter code: Elongation factor G, mitochondrial (745 aa).

The region spanning 40 to 317 (EKIRNIGISA…AVLDYLPNPG (278 aa)) is the tr-type G domain. GTP contacts are provided by residues 49 to 56 (AHIDSGKT), 116 to 120 (DTPGH), and 170 to 173 (NKLD).

It belongs to the TRAFAC class translation factor GTPase superfamily. Classic translation factor GTPase family. EF-G/EF-2 subfamily.

It is found in the mitochondrion. It functions in the pathway protein biosynthesis; polypeptide chain elongation. In terms of biological role, mitochondrial GTPase that catalyzes the GTP-dependent ribosomal translocation step during translation elongation. During this step, the ribosome changes from the pre-translocational (PRE) to the post-translocational (POST) state as the newly formed A-site-bound peptidyl-tRNA and P-site-bound deacylated tRNA move to the P and E sites, respectively. Catalyzes the coordinated movement of the two tRNA molecules, the mRNA and conformational changes in the ribosome. Essential during development as it acts as a retrograde signal from mitochondria to the nucleus to slow down cell proliferation if mitochondrial energy output is low. In Drosophila willistoni (Fruit fly), this protein is Elongation factor G, mitochondrial.